A 443-amino-acid polypeptide reads, in one-letter code: Thymidine phosphorylase (443 aa).

The protein belongs to the thymidine/pyrimidine-nucleoside phosphorylase family. As to quaternary structure, homodimer.

It carries out the reaction thymidine + phosphate = 2-deoxy-alpha-D-ribose 1-phosphate + thymine. Its pathway is pyrimidine metabolism; dTMP biosynthesis via salvage pathway; dTMP from thymine: step 1/2. In terms of biological role, the enzymes which catalyze the reversible phosphorolysis of pyrimidine nucleosides are involved in the degradation of these compounds and in their utilization as carbon and energy sources, or in the rescue of pyrimidine bases for nucleotide synthesis. This Shewanella denitrificans (strain OS217 / ATCC BAA-1090 / DSM 15013) protein is Thymidine phosphorylase.